The following is a 484-amino-acid chain: UDP-N-acetylmuramate--L-alanine ligase (484 aa).

An ATP-binding site is contributed by 128-134 (GTHGKTT).

Belongs to the MurCDEF family.

Its subcellular location is the cytoplasm. It carries out the reaction UDP-N-acetyl-alpha-D-muramate + L-alanine + ATP = UDP-N-acetyl-alpha-D-muramoyl-L-alanine + ADP + phosphate + H(+). The protein operates within cell wall biogenesis; peptidoglycan biosynthesis. Its function is as follows. Cell wall formation. The sequence is that of UDP-N-acetylmuramate--L-alanine ligase from Shewanella loihica (strain ATCC BAA-1088 / PV-4).